A 317-amino-acid polypeptide reads, in one-letter code: Beta-ketoacyl-[acyl-carrier-protein] synthase III (317 aa).

Active-site residues include cysteine 112 and histidine 244. Residues 245–249 are ACP-binding; it reads QANIR. Residue asparagine 274 is part of the active site.

The protein belongs to the thiolase-like superfamily. FabH family. In terms of assembly, homodimer.

The protein localises to the cytoplasm. It carries out the reaction malonyl-[ACP] + acetyl-CoA + H(+) = 3-oxobutanoyl-[ACP] + CO2 + CoA. It participates in lipid metabolism; fatty acid biosynthesis. In terms of biological role, catalyzes the condensation reaction of fatty acid synthesis by the addition to an acyl acceptor of two carbons from malonyl-ACP. Catalyzes the first condensation reaction which initiates fatty acid synthesis and may therefore play a role in governing the total rate of fatty acid production. Possesses both acetoacetyl-ACP synthase and acetyl transacylase activities. Its substrate specificity determines the biosynthesis of branched-chain and/or straight-chain of fatty acids. The chain is Beta-ketoacyl-[acyl-carrier-protein] synthase III from Rickettsia felis (strain ATCC VR-1525 / URRWXCal2) (Rickettsia azadi).